A 501-amino-acid polypeptide reads, in one-letter code: Bifunctional purine biosynthesis protein PurH (501 aa).

Positions 1–144 (MKKRALISVF…KNFKDVVVLS (144 aa)) constitute an MGS-like domain.

Belongs to the PurH family.

The catalysed reaction is (6R)-10-formyltetrahydrofolate + 5-amino-1-(5-phospho-beta-D-ribosyl)imidazole-4-carboxamide = 5-formamido-1-(5-phospho-D-ribosyl)imidazole-4-carboxamide + (6S)-5,6,7,8-tetrahydrofolate. It carries out the reaction IMP + H2O = 5-formamido-1-(5-phospho-D-ribosyl)imidazole-4-carboxamide. It participates in purine metabolism; IMP biosynthesis via de novo pathway; 5-formamido-1-(5-phospho-D-ribosyl)imidazole-4-carboxamide from 5-amino-1-(5-phospho-D-ribosyl)imidazole-4-carboxamide (10-formyl THF route): step 1/1. Its pathway is purine metabolism; IMP biosynthesis via de novo pathway; IMP from 5-formamido-1-(5-phospho-D-ribosyl)imidazole-4-carboxamide: step 1/1. This chain is Bifunctional purine biosynthesis protein PurH, found in Clostridium perfringens (strain SM101 / Type A).